A 428-amino-acid chain; its full sequence is Mitochondrial distribution and morphology protein 12 (428 aa).

The 387-residue stretch at 1–387 (MSFDINWNQL…WPSWICIDMN (387 aa)) folds into the SMP-LTD domain. Disordered regions lie at residues 75 to 168 (VMNE…APPL) and 387 to 428 (NDDD…EAGE). Basic and acidic residues predominate over residues 81-96 (NDSKDEHLKNHGDGIN). Residues 106-133 (LDDEDEDDEDDDEDDEDEEEEDEDDYDD) are compositionally biased toward acidic residues. The segment covering 146–161 (LNFNENSTTPSANSFA) has biased composition (polar residues). The segment covering 387–403 (NDDDDEEEEEEESEDND) has biased composition (acidic residues). Residues 412-428 (NDGKHGDGRTDETEAGE) show a composition bias toward basic and acidic residues.

This sequence belongs to the MDM12 family. In terms of assembly, component of the ER-mitochondria encounter structure (ERMES) or MDM complex, composed of MMM1, MDM10, MDM12 and MDM34. An MMM1 homodimer associates with one molecule of MDM12 on each side in a pairwise head-to-tail manner, and the SMP-LTD domains of MMM1 and MDM12 generate a continuous hydrophobic tunnel for phospholipid trafficking.

The protein resides in the mitochondrion outer membrane. It is found in the endoplasmic reticulum membrane. Component of the ERMES/MDM complex, which serves as a molecular tether to connect the endoplasmic reticulum (ER) and mitochondria. Components of this complex are involved in the control of mitochondrial shape and protein biogenesis, and function in nonvesicular lipid trafficking between the ER and mitochondria. MDM12 is required for the interaction of the ER-resident membrane protein MMM1 and the outer mitochondrial membrane-resident beta-barrel protein MDM10. The MDM12-MMM1 subcomplex functions in the major beta-barrel assembly pathway that is responsible for biogenesis of all mitochondrial outer membrane beta-barrel proteins, and acts in a late step after the SAM complex. The MDM10-MDM12-MMM1 subcomplex further acts in the TOM40-specific pathway after the action of the MDM12-MMM1 complex. Essential for establishing and maintaining the structure of mitochondria and maintenance of mtDNA nucleoids. The polypeptide is Mitochondrial distribution and morphology protein 12 (Candida albicans (strain SC5314 / ATCC MYA-2876) (Yeast)).